The sequence spans 554 residues: Undecaprenyl phosphate-alpha-4-amino-4-deoxy-L-arabinose arabinosyl transferase (554 aa).

The next 11 membrane-spanning stretches (helical) occupy residues 4–24 (LKGS…LLPI), 87–107 (FGSI…ATLL), 115–135 (FLAA…SYAV), 178–198 (FMTK…PIVI), 206–226 (LIIF…PWAL), 262–282 (YLPI…AALL), 293–313 (ELFF…VAKG), 315–335 (LPTY…AYAT), 352–372 (INLI…MGWV), 384–404 (QKVI…FATM), and 410–430 (HWHW…YLIP).

This sequence belongs to the glycosyltransferase 83 family.

It is found in the cell inner membrane. It carries out the reaction 4-amino-4-deoxy-alpha-L-arabinopyranosyl di-trans,octa-cis-undecaprenyl phosphate + lipid IVA = lipid IIA + di-trans,octa-cis-undecaprenyl phosphate.. It participates in lipopolysaccharide metabolism; 4-amino-4-deoxy-beta-L-arabinose-lipid A biosynthesis. Catalyzes the transfer of the L-Ara4N moiety of the glycolipid undecaprenyl phosphate-alpha-L-Ara4N to lipid A. The modified arabinose is attached to lipid A and is required for resistance to polymyxin and cationic antimicrobial peptides. This chain is Undecaprenyl phosphate-alpha-4-amino-4-deoxy-L-arabinose arabinosyl transferase, found in Yersinia enterocolitica serotype O:8 / biotype 1B (strain NCTC 13174 / 8081).